The following is a 159-amino-acid chain: 2-C-methyl-D-erythritol 2,4-cyclodiphosphate synthase (159 aa).

A divalent metal cation is bound by residues D10 and H12. Residues 10–12 and 37–38 each bind 4-CDP-2-C-methyl-D-erythritol 2-phosphate; these read DVH and HS. An a divalent metal cation-binding site is contributed by H45. 4-CDP-2-C-methyl-D-erythritol 2-phosphate is bound by residues 59 to 61, 64 to 68, 103 to 109, 135 to 138, F142, and R145; these read DIG, FPDTD, AQAPKML, and TTTE.

This sequence belongs to the IspF family. As to quaternary structure, homotrimer. A divalent metal cation is required as a cofactor.

It catalyses the reaction 4-CDP-2-C-methyl-D-erythritol 2-phosphate = 2-C-methyl-D-erythritol 2,4-cyclic diphosphate + CMP. It participates in isoprenoid biosynthesis; isopentenyl diphosphate biosynthesis via DXP pathway; isopentenyl diphosphate from 1-deoxy-D-xylulose 5-phosphate: step 4/6. In terms of biological role, involved in the biosynthesis of isopentenyl diphosphate (IPP) and dimethylallyl diphosphate (DMAPP), two major building blocks of isoprenoid compounds. Catalyzes the conversion of 4-diphosphocytidyl-2-C-methyl-D-erythritol 2-phosphate (CDP-ME2P) to 2-C-methyl-D-erythritol 2,4-cyclodiphosphate (ME-CPP) with a corresponding release of cytidine 5-monophosphate (CMP). The chain is 2-C-methyl-D-erythritol 2,4-cyclodiphosphate synthase from Francisella philomiragia subsp. philomiragia (strain ATCC 25017 / CCUG 19701 / FSC 153 / O#319-036).